A 157-amino-acid polypeptide reads, in one-letter code: UPF0225 protein PMI1492 (157 aa).

Belongs to the UPF0225 family.

This is UPF0225 protein PMI1492 from Proteus mirabilis (strain HI4320).